Here is a 461-residue protein sequence, read N- to C-terminus: E3 ubiquitin-protein ligase TRIM15 (461 aa).

Residues 12-57 (CSDCQGRLEDAVTAACGHTFCRLCLPLPPQMGAQPSSRVLLCPVCQ) form an RING-type zinc finger. The segment at 74 to 115 (LGETYCEEHGEKIYFFCENDAEFLCVFCREGPSHQAHAVGFL) adopts a B box-type zinc-finger fold. 4 residues coordinate Zn(2+): Cys-79, His-82, Cys-101, and His-107. The stretch at 123-230 (RDRLRGRLEA…EKCQQPASEL (108 aa)) forms a coiled coil. The region spanning 272-461 (EMLRAFSENL…KKGSCLTLKG (190 aa)) is the B30.2/SPRY domain.

The protein belongs to the TRIM/RBCC family. As to quaternary structure, interacts with paxillin/PXN; this interaction recruits TRIM15 to focal adhesions. Interacts with TRIM8; this interaction prevents TRIM8 cytoplasmic translocation.

The protein resides in the cytoplasm. The protein localises to the nucleus. Its subcellular location is the cell junction. It localises to the focal adhesion. It catalyses the reaction S-ubiquitinyl-[E2 ubiquitin-conjugating enzyme]-L-cysteine + [acceptor protein]-L-lysine = [E2 ubiquitin-conjugating enzyme]-L-cysteine + N(6)-ubiquitinyl-[acceptor protein]-L-lysine.. In terms of biological role, E3 ubiquitin ligase that plays a role in several processes including innate antiviral immnity, cell migration and chemotaxis. Acts as a 'Lys-63'-specific ubiquitin ligase for MAPK1/ERK2 and MAPK3/ERK1, promoting their activation by facilitating their interaction with MAP2K1 and MAP2K2. Also plays a role in cell migration and chemotaxis by acting as a stable focal adhesion component upon recruitment by multi-adapter protein paxillin/PXN. Functions in the RIGI-mediated interferon induction pathway upstream or at the level of MAVS. Inhibits NF-kappa-B activation by turnover of 'Lys-63'-linked ubiquitination of MAP3K7/TAK1. Mechanistically, prevents TRIM8 cytoplasmic translocation and thus inhibits TRIM8-mediated 'Lys-63'-linked polyubiquitination of MAP3K7/TAK1 in the cytoplasm. Also has an important regulatory effect on the activation of hepatic stellate cells (HSCs). In Sus scrofa (Pig), this protein is E3 ubiquitin-protein ligase TRIM15 (TRIM15).